A 607-amino-acid chain; its full sequence is DNA primase (607 aa).

Residues 39-63 form a CHC2-type zinc finger; it reads CPFHDDKNPSMSISSSKNIFKCWAC. Residues 267 to 350 form the Toprim domain; the sequence is NQLFIVEGYF…IVEIVQWEHN (84 aa). The Mg(2+) site is built by glutamate 273, aspartate 319, and aspartate 321.

This sequence belongs to the DnaG primase family. Monomer. Interacts with DnaB. Zn(2+) is required as a cofactor. Mg(2+) serves as cofactor.

The catalysed reaction is ssDNA + n NTP = ssDNA/pppN(pN)n-1 hybrid + (n-1) diphosphate.. Its function is as follows. RNA polymerase that catalyzes the synthesis of short RNA molecules used as primers for DNA polymerase during DNA replication. This is DNA primase from Mycoplasma genitalium (strain ATCC 33530 / DSM 19775 / NCTC 10195 / G37) (Mycoplasmoides genitalium).